Reading from the N-terminus, the 544-residue chain is Cytochrome P450 monooxygenase tenB (544 aa).

The helical transmembrane segment at 13–33 threads the bilayer; the sequence is LGYYEKVTGILGVVSIILLFW. Positions 438 to 448 are enriched in basic and acidic residues; sequence FDPFRFSRASK. The disordered stretch occupies residues 438–467; the sequence is FDPFRFSRASKDDDDDDDDDGRSTSSHTKD. Cys-486 provides a ligand contact to heme.

Belongs to the cytochrome P450 family. Requires heme as cofactor.

It is found in the membrane. Its pathway is secondary metabolite biosynthesis. Cytochrome P450 monooxygenase; part of the gene cluster that mediates the biosynthesis of tenellin-type 2-pyridones, iron-chelating compounds involved in iron stress tolerance, competition with the natural competitor fungus Metarhizium robertsii and insect hosts infection. TenB catalyzes the selective N-hydroxylation of the 2-pyridone nitrogen of yield tellinin and 15-hydroxytellenin (15-HT), respectively. The pathway begins with the assembly of the polyketide-amino acid backbone by the hybrid PKS-NRPS tenS with the help of the enoyl reductase tenC. These enzymes catalyze the synthesis of the pyrrolidine-2-dione intermediates pretellinin A, 11-hydropretellenin A, 12-hydropretellenin A, 13-hydropretellenin A, 14-hydropretellenin A, 12-oxopretellenin A and prototellinin D. The cytochrome P450 monooxygenase tenA then catalyzes an oxidative ring expansion of pretenellin A and 14-hydropretellenin A to form the 2-pyridone core, leading to pretenellin B and pyridovericin, respectively. The cytochrome P450 monooxygenase tenB is then required for the selective N-hydroxylation of the 2-pyridone nitrogen of yield tellinin and 15-hydroxytellenin (15-HT), respectively. The UDP-glucosyltransferase GT1 and the methyltransferase MT1, located outside the tenS gene cluster, contribute to the stepwise glycosylation and methylation of 15-HT to obtain the glycoside pyridovericin-N-O-(4-O-methyl-beta-D-glucopyranoside) (PMGP). Additional related compounds such as 1-O-methyl-15-HT, (8Z)-1-O-methyl-15-HT, and O-methyltenellin A are also produced but the enzymes involved in their biosynthesis have still to be determined. In Beauveria bassiana (strain ARSEF 2860) (White muscardine disease fungus), this protein is Cytochrome P450 monooxygenase tenB.